The sequence spans 2126 residues: Phthioceranic/hydroxyphthioceranic acid synthase (2126 aa).

A Ketosynthase family 3 (KS3) domain is found at 24 to 447; it reads VTPVAVIGMA…GTNVHAVVEQ (424 aa). Cysteine 196 serves as the catalytic Acyl-thioester intermediate; for beta-ketoacyl synthase activity. Catalysis depends on for beta-ketoacyl synthase activity residues histidine 331 and histidine 367. The interval 449-549 is linker domain (LD); that stretch reads PQTEAQPHAA…VYQPAVGQDD (101 aa). The interval 550-849 is acyltransferase (AT); the sequence is RGPVWLFSGQ…VAALAGMRRE (300 aa). Serine 641 acts as the Acyl-ester intermediate; for acyltransferase activity in catalysis. Residues 909–1191 are dehydratase (DH); the sequence is STVAVHPLLG…LAVCGLRIGT (283 aa). An N-terminal hotdog fold region spans residues 914–1032; sequence HPLLGAHVRL…RRASAVLQQV (119 aa). Residues 914-1198 enclose the PKS/mFAS DH domain; sequence HPLLGAHVRL…IGTGVSERDK (285 aa). Histidine 947 (proton acceptor; for dehydratase activity) is an active-site residue. The C-terminal hotdog fold stretch occupies residues 1051-1198; it reads PCRVDGEDLR…IGTGVSERDK (148 aa). Residue aspartate 1115 is the Proton donor; for dehydratase activity of the active site. Residues 1227-1398 are pseudo beta-ketoacyl reductase (PsiKR); that stretch reads KWLLISDCAA…SEEDETAWRD (172 aa). The enoylreductase (ER) stretch occupies residues 1426–1750; it reads SGMRLQIRTP…EHTGKLVLHI (325 aa). Positions 1772–2019 are beta-ketoacyl reductase (KR); it reads GSYIITGGLG…AERSRFFEVF (248 aa). Residues 1780 to 1783, 1803 to 1806, 1831 to 1832, and 1904 to 1905 each bind NADP(+); these read LGGL, SRTQ, DI, and FS. A Carrier domain is found at 2040–2126; that stretch reads DEWPARLRQL…DAPAAALSSQ (87 aa). The residue at position 2075 (serine 2075) is an O-(pantetheine 4'-phosphoryl)serine.

Pantetheine 4'-phosphate serves as cofactor.

It carries out the reaction hexadecanoyl-[(hydroxy)phthioceranic acid synthase] + 7 (S)-methylmalonyl-CoA + 14 NADPH + 21 H(+) = C37-phthioceranyl-[(hydroxy)phthioceranic acid synthase] + 7 CO2 + 14 NADP(+) + 7 CoA + 7 H2O. The catalysed reaction is hexadecanoyl-[(hydroxy)phthioceranic acid synthase] + 8 (S)-methylmalonyl-CoA + 16 NADPH + 24 H(+) = C40-phthioceranyl-[(hydroxy)phthioceranic acid synthase] + 8 CO2 + 16 NADP(+) + 8 CoA + 8 H2O. It participates in lipid metabolism; fatty acid biosynthesis. Its pathway is glycolipid metabolism; sulfolipid-1 biosynthesis. Its function is as follows. Involved in sulfolipid-1 biosynthesis. Catalyzes the synthesis of the hepta- and octamethyl phthioceranic and hydroxyphthioceranic acids, the methyl-branched acyl constituents of sulfolipids. The chain is Phthioceranic/hydroxyphthioceranic acid synthase (pks2) from Mycobacterium bovis (strain ATCC BAA-935 / AF2122/97).